The chain runs to 335 residues: Holliday junction branch migration complex subunit RuvB (335 aa).

A large ATPase domain (RuvB-L) region spans residues 4 to 184 (ADRIISTSAK…FGIVQRLEFY (181 aa)). ATP contacts are provided by residues Ile-23, Arg-24, Gly-65, Lys-68, Thr-69, Thr-70, 131 to 133 (EDY), Arg-174, Tyr-184, and Arg-221. Thr-69 provides a ligand contact to Mg(2+). A small ATPAse domain (RuvB-S) region spans residues 185–255 (AVEDLTSIVA…SAKAALLMLD (71 aa)). The segment at 258 to 335 (DAGFDYLDRK…RYFGLEKLTE (78 aa)) is head domain (RuvB-H). Residues Arg-294, Arg-313, and Arg-318 each coordinate DNA.

Belongs to the RuvB family. As to quaternary structure, homohexamer. Forms an RuvA(8)-RuvB(12)-Holliday junction (HJ) complex. HJ DNA is sandwiched between 2 RuvA tetramers; dsDNA enters through RuvA and exits via RuvB. An RuvB hexamer assembles on each DNA strand where it exits the tetramer. Each RuvB hexamer is contacted by two RuvA subunits (via domain III) on 2 adjacent RuvB subunits; this complex drives branch migration. In the full resolvosome a probable DNA-RuvA(4)-RuvB(12)-RuvC(2) complex forms which resolves the HJ.

The protein localises to the cytoplasm. It catalyses the reaction ATP + H2O = ADP + phosphate + H(+). The RuvA-RuvB-RuvC complex processes Holliday junction (HJ) DNA during genetic recombination and DNA repair, while the RuvA-RuvB complex plays an important role in the rescue of blocked DNA replication forks via replication fork reversal (RFR). RuvA specifically binds to HJ cruciform DNA, conferring on it an open structure. The RuvB hexamer acts as an ATP-dependent pump, pulling dsDNA into and through the RuvAB complex. RuvB forms 2 homohexamers on either side of HJ DNA bound by 1 or 2 RuvA tetramers; 4 subunits per hexamer contact DNA at a time. Coordinated motions by a converter formed by DNA-disengaged RuvB subunits stimulates ATP hydrolysis and nucleotide exchange. Immobilization of the converter enables RuvB to convert the ATP-contained energy into a lever motion, pulling 2 nucleotides of DNA out of the RuvA tetramer per ATP hydrolyzed, thus driving DNA branch migration. The RuvB motors rotate together with the DNA substrate, which together with the progressing nucleotide cycle form the mechanistic basis for DNA recombination by continuous HJ branch migration. Branch migration allows RuvC to scan DNA until it finds its consensus sequence, where it cleaves and resolves cruciform DNA. This is Holliday junction branch migration complex subunit RuvB from Pasteurella multocida (strain Pm70).